Consider the following 288-residue polypeptide: Ribosomal protein L11 methyltransferase (288 aa).

S-adenosyl-L-methionine-binding residues include Thr134, Gly157, Asp179, and Asn224.

Belongs to the methyltransferase superfamily. PrmA family.

It is found in the cytoplasm. The enzyme catalyses L-lysyl-[protein] + 3 S-adenosyl-L-methionine = N(6),N(6),N(6)-trimethyl-L-lysyl-[protein] + 3 S-adenosyl-L-homocysteine + 3 H(+). In terms of biological role, methylates ribosomal protein L11. The chain is Ribosomal protein L11 methyltransferase from Caulobacter sp. (strain K31).